The sequence spans 91 residues: Acylphosphatase (91 aa).

Residues 3–90 (RVSMIVSGQV…CGYSIFTIRR (88 aa)) enclose the Acylphosphatase-like domain. Catalysis depends on residues Arg18 and Asn36.

Belongs to the acylphosphatase family.

It carries out the reaction an acyl phosphate + H2O = a carboxylate + phosphate + H(+). The sequence is that of Acylphosphatase (acyP) from Methanospirillum hungatei JF-1 (strain ATCC 27890 / DSM 864 / NBRC 100397 / JF-1).